Here is a 69-residue protein sequence, read N- to C-terminus: UPF0150 protein ssr1258 (69 aa).

Belongs to the UPF0150 family.

The protein is UPF0150 protein ssr1258 of Synechocystis sp. (strain ATCC 27184 / PCC 6803 / Kazusa).